Reading from the N-terminus, the 614-residue chain is Glutamyl-tRNA(Gln) amidotransferase subunit E (614 aa).

Belongs to the GatB/GatE family. GatE subfamily. As to quaternary structure, heterodimer of GatD and GatE.

It carries out the reaction L-glutamyl-tRNA(Gln) + L-glutamine + ATP + H2O = L-glutaminyl-tRNA(Gln) + L-glutamate + ADP + phosphate + H(+). In terms of biological role, allows the formation of correctly charged Gln-tRNA(Gln) through the transamidation of misacylated Glu-tRNA(Gln) in organisms which lack glutaminyl-tRNA synthetase. The reaction takes place in the presence of glutamine and ATP through an activated gamma-phospho-Glu-tRNA(Gln). The GatDE system is specific for glutamate and does not act on aspartate. The protein is Glutamyl-tRNA(Gln) amidotransferase subunit E of Methanospirillum hungatei JF-1 (strain ATCC 27890 / DSM 864 / NBRC 100397 / JF-1).